We begin with the raw amino-acid sequence, 414 residues long: Probable serine/threonine-protein kinase PBL26 (414 aa).

A lipid anchor (S-palmitoyl cysteine) is attached at cysteine 3. Positions 17–41 (RDSDNSYRRNGEVTGRDNNKTHPEN) are enriched in basic and acidic residues. The segment at 17-55 (RDSDNSYRRNGEVTGRDNNKTHPENPKTVNEQNKNNDED) is disordered. The Protein kinase domain occupies 79 to 356 (FRQECLIGEG…SDVVTALGFL (278 aa)). ATP-binding positions include 85-93 (IGEGGFGRV) and lysine 108. A Phosphotyrosine modification is found at tyrosine 153. The Proton acceptor role is filled by aspartate 206. Serine 240 is modified (phosphoserine). The residue at position 246 (threonine 246) is a Phosphothreonine. Position 254 is a phosphotyrosine (tyrosine 254). Residues 364-394 (ISVPHYDDPPQPSDETSVEDSVAAEERERAV) form a disordered region.

The protein belongs to the protein kinase superfamily. Ser/Thr protein kinase family. In terms of processing, palmitoylation at Cys-3 and Cys-6 are required for plasma membrane location.

It localises to the cell membrane. The enzyme catalyses L-seryl-[protein] + ATP = O-phospho-L-seryl-[protein] + ADP + H(+). It catalyses the reaction L-threonyl-[protein] + ATP = O-phospho-L-threonyl-[protein] + ADP + H(+). Functionally, may be involved in plant defense signaling. The polypeptide is Probable serine/threonine-protein kinase PBL26 (Arabidopsis thaliana (Mouse-ear cress)).